The following is a 204-amino-acid chain: Dihydroorotase (204 aa).

His-34 provides a ligand contact to Zn(2+). Leu-79 is a binding site for substrate. Asp-107 serves as a coordination point for Zn(2+). The active site involves Asp-107. Substrate contacts are provided by His-111 and Ala-123.

The protein belongs to the metallo-dependent hydrolases superfamily. DHOase family. Class II DHOase subfamily. Homodimer. Zn(2+) serves as cofactor.

It catalyses the reaction (S)-dihydroorotate + H2O = N-carbamoyl-L-aspartate + H(+). The protein operates within pyrimidine metabolism; UMP biosynthesis via de novo pathway; (S)-dihydroorotate from bicarbonate: step 3/3. Its function is as follows. Catalyzes the reversible cyclization of carbamoyl aspartate to dihydroorotate. The polypeptide is Dihydroorotase (Serratia marcescens).